A 450-amino-acid polypeptide reads, in one-letter code: UDP-N-acetylmuramoylalanine--D-glutamate ligase (450 aa).

119-125 contacts ATP; the sequence is GSNGKTT.

It belongs to the MurCDEF family.

It localises to the cytoplasm. It catalyses the reaction UDP-N-acetyl-alpha-D-muramoyl-L-alanine + D-glutamate + ATP = UDP-N-acetyl-alpha-D-muramoyl-L-alanyl-D-glutamate + ADP + phosphate + H(+). Its pathway is cell wall biogenesis; peptidoglycan biosynthesis. Its function is as follows. Cell wall formation. Catalyzes the addition of glutamate to the nucleotide precursor UDP-N-acetylmuramoyl-L-alanine (UMA). The sequence is that of UDP-N-acetylmuramoylalanine--D-glutamate ligase from Streptococcus pneumoniae (strain Hungary19A-6).